Reading from the N-terminus, the 72-residue chain is Translation initiation factor IF-1 (72 aa).

One can recognise an S1-like domain in the interval 1-72 (MAKSDVIEME…SKGRIVYRAR (72 aa)).

It belongs to the IF-1 family. In terms of assembly, component of the 30S ribosomal translation pre-initiation complex which assembles on the 30S ribosome in the order IF-2 and IF-3, IF-1 and N-formylmethionyl-tRNA(fMet); mRNA recruitment can occur at any time during PIC assembly.

The protein localises to the cytoplasm. In terms of biological role, one of the essential components for the initiation of protein synthesis. Stabilizes the binding of IF-2 and IF-3 on the 30S subunit to which N-formylmethionyl-tRNA(fMet) subsequently binds. Helps modulate mRNA selection, yielding the 30S pre-initiation complex (PIC). Upon addition of the 50S ribosomal subunit IF-1, IF-2 and IF-3 are released leaving the mature 70S translation initiation complex. In Marinobacter nauticus (strain ATCC 700491 / DSM 11845 / VT8) (Marinobacter aquaeolei), this protein is Translation initiation factor IF-1.